Here is a 491-residue protein sequence, read N- to C-terminus: N-succinylglutamate 5-semialdehyde dehydrogenase (491 aa).

Residue 225 to 230 (GSSTVG) coordinates NAD(+). Catalysis depends on residues Glu248 and Cys282.

It belongs to the aldehyde dehydrogenase family. AstD subfamily.

It carries out the reaction N-succinyl-L-glutamate 5-semialdehyde + NAD(+) + H2O = N-succinyl-L-glutamate + NADH + 2 H(+). It functions in the pathway amino-acid degradation; L-arginine degradation via AST pathway; L-glutamate and succinate from L-arginine: step 4/5. Functionally, catalyzes the NAD-dependent reduction of succinylglutamate semialdehyde into succinylglutamate. The chain is N-succinylglutamate 5-semialdehyde dehydrogenase from Marinobacter nauticus (strain ATCC 700491 / DSM 11845 / VT8) (Marinobacter aquaeolei).